Here is a 962-residue protein sequence, read N- to C-terminus: Glycine dehydrogenase (decarboxylating) (962 aa).

The residue at position 709 (Lys709) is an N6-(pyridoxal phosphate)lysine.

It belongs to the GcvP family. The glycine cleavage system is composed of four proteins: P, T, L and H. Requires pyridoxal 5'-phosphate as cofactor.

It catalyses the reaction N(6)-[(R)-lipoyl]-L-lysyl-[glycine-cleavage complex H protein] + glycine + H(+) = N(6)-[(R)-S(8)-aminomethyldihydrolipoyl]-L-lysyl-[glycine-cleavage complex H protein] + CO2. The glycine cleavage system catalyzes the degradation of glycine. The P protein binds the alpha-amino group of glycine through its pyridoxal phosphate cofactor; CO(2) is released and the remaining methylamine moiety is then transferred to the lipoamide cofactor of the H protein. This Shewanella frigidimarina (strain NCIMB 400) protein is Glycine dehydrogenase (decarboxylating).